A 144-amino-acid chain; its full sequence is uncharacterized protein (144 aa).

A run of 2 helical transmembrane segments spans residues 10-30 (ILTR…GLGP) and 60-80 (YVFL…AIAV).

The protein localises to the membrane. This is an uncharacterized protein from Saccharomyces cerevisiae (strain ATCC 204508 / S288c) (Baker's yeast).